Reading from the N-terminus, the 232-residue chain is Vacuolar iron transporter homolog 1 (232 aa).

Residues 1–59 lie on the Cytoplasmic side of the membrane; the sequence is MAIDLGCHVGCASPETKQEETADPTAAPVVVDDVEAAAGGRRPGDGGGVNYVARAQWLR. A helical membrane pass occupies residues 60–80; the sequence is AAVLGANDGLVSVASLMVGVG. Over 81-89 the chain is Vacuolar; sequence AANGTRRAM. A helical transmembrane segment spans residues 90–110; that stretch reads LVSGLAGLVAGACSMAIGEFV. Residues 111–148 are Cytoplasmic-facing; the sequence is SVYAQCDIQAAQIERARGGKDADGGEEEEELPSPTMAA. Residues 149–169 traverse the membrane as a helical segment; sequence VASALSFAAGAALPLLAGGFV. Topologically, residues 170 to 175 are vacuolar; the sequence is RPWAAR. A helical membrane pass occupies residues 176–196; the sequence is VAAVCAASSLGLAGFGVASAY. Over 197–208 the chain is Cytoplasmic; the sequence is LGGAGVARSGVR. The chain crosses the membrane as a helical span at residues 209-229; that stretch reads MLVGGWLAMAVTYGVLKLFGM. Residues 230-232 lie on the Vacuolar side of the membrane; the sequence is HGV.

It belongs to the CCC1 family.

It is found in the vacuole membrane. It catalyses the reaction Fe(2+)(in) = Fe(2+)(out). In terms of biological role, probable vacuolar iron transporter that may be involved in the regulation of iron distribution throughout the plant. The protein is Vacuolar iron transporter homolog 1 of Oryza sativa subsp. japonica (Rice).